A 383-amino-acid polypeptide reads, in one-letter code: MGASQKNQELIGGLILFSAALLAIVVNNSPLASYYAMLETINVKLGIENLVIDKNLMHWINDGLMAIYFLYIGLEIKREIIVGTLSKPSNIITPAIAAFAGLAMPSLIYLSINHDIKVINGWAIPSATDIAFTLAILALLGTRVPAKLKLLVITIAIFDDIAAIAIIAIFYTKSLSLLSLSLGTLFILAMIICNRIFKINRSSVYVVLGFFAWFCTIKSGVHATLAGFTTALCIPFRENDKDSPANFMEDSLHPWIIYFILPVFAFANAGISFSGISFSILFEPITLGIIWGLFVGKQLGIFSILAVFKKLKWFKLGESFSNLQLYGISLLCGIGFTMSLFIGVLAFNDTHLLNAIKIGVVVGSVLSGFFGYIVLRFIVTNPS.

Helical transmembrane passes span 10-30 (LIGG…NNSP), 56-76 (LMHW…GLEI), 91-111 (IITP…IYLS), 121-141 (GWAI…ALLG), 150-170 (LLVI…IAIF), 174-194 (SLSL…IICN), 206-226 (VVLG…ATLA), 254-274 (PWII…ISFS), 289-308 (IIWG…LAVF), 327-347 (GISL…VLAF), and 355-375 (AIKI…YIVL).

The protein belongs to the NhaA Na(+)/H(+) (TC 2.A.33) antiporter family.

It localises to the cell inner membrane. The catalysed reaction is Na(+)(in) + 2 H(+)(out) = Na(+)(out) + 2 H(+)(in). In terms of biological role, na(+)/H(+) antiporter that extrudes sodium in exchange for external protons. The protein is Na(+)/H(+) antiporter NhaA of Francisella tularensis subsp. tularensis (strain WY96-3418).